A 116-amino-acid polypeptide reads, in one-letter code: Non-specific lipid-transfer protein C, cotyledon-specific isoform (116 aa).

Positions 1-24 are cleaved as a signal peptide; it reads MKNVVFSVLLLLSFLFCLANTNEA. 4 disulfide bridges follow: Cys28–Cys76, Cys38–Cys53, Cys54–Cys98, and Cys74–Cys112.

This sequence belongs to the plant LTP family.

Plant non-specific lipid-transfer proteins transfer phospholipids as well as galactolipids across membranes. May play a role in wax or cutin deposition in the cell walls of expanding epidermal cells and certain secretory tissues. The sequence is that of Non-specific lipid-transfer protein C, cotyledon-specific isoform from Ricinus communis (Castor bean).